Here is a 682-residue protein sequence, read N- to C-terminus: Methionine--tRNA ligase (682 aa).

Positions 15–25 (PYANGAIHLGH) match the 'HIGH' region motif. 4 residues coordinate Zn(2+): C146, C149, C159, and C162. The 'KMSKS' region signature appears at 331 to 335 (KMSKS). Residue K334 participates in ATP binding. Residues 580-682 (DLAKLDMRVA…NGVTAGMQVK (103 aa)) form the tRNA-binding domain.

Belongs to the class-I aminoacyl-tRNA synthetase family. MetG type 1 subfamily. As to quaternary structure, homodimer. Zn(2+) is required as a cofactor.

It is found in the cytoplasm. It catalyses the reaction tRNA(Met) + L-methionine + ATP = L-methionyl-tRNA(Met) + AMP + diphosphate. Is required not only for elongation of protein synthesis but also for the initiation of all mRNA translation through initiator tRNA(fMet) aminoacylation. The polypeptide is Methionine--tRNA ligase (Haemophilus influenzae (strain 86-028NP)).